A 384-amino-acid polypeptide reads, in one-letter code: Sodium channel protein Nach (384 aa).

The Extracellular segment spans residues 1 to 319; the sequence is AAFAYFSGFM…LVSHLGSAFS (319 aa). N32 and N215 each carry an N-linked (GlcNAc...) asparagine glycan. A helical membrane pass occupies residues 320–340; it reads LFVGMSMLSLVEIIYYFTVIL. Topologically, residues 341–384 are cytoplasmic; sequence RRNYVQECRARQKLQTLHRRPNFGWPGDKNSNQQKSVFYIRGRN.

This sequence belongs to the amiloride-sensitive sodium channel (TC 1.A.6) family.

Its subcellular location is the membrane. Functionally, part of a complex that plays a role in tracheal liquid clearance. Probable role in sodium transport. The sequence is that of Sodium channel protein Nach (Nach) from Drosophila virilis (Fruit fly).